Reading from the N-terminus, the 388-residue chain is Na(+)/H(+) antiporter NhaA (388 aa).

Topologically, residues 1-11 (MKHLHRFFSSD) are cytoplasmic. The helical transmembrane segment at 12–31 (ASGGIILIIAAVLAMIMANS) threads the bilayer. Residues 32–58 (GATSGWYHDFLETPVQLRVGTLEINKN) lie on the Periplasmic side of the membrane. A helical transmembrane segment spans residues 59 to 80 (MLLWINDALMAVFFLLVGLEVK). Residues 81–96 (RELMQGSLASLRQAAF) lie on the Cytoplasmic side of the membrane. Residues 97–116 (PVIAAIGGMIVPALLYLAFN) traverse the membrane as a helical segment. Residues 117-122 (YADPIT) lie on the Periplasmic side of the membrane. A helical membrane pass occupies residues 123-130 (REGWAIPA). At 131-154 (ATDIAFALGVLALLGSRVPLALKI) the chain is on the cytoplasmic side. A helical transmembrane segment spans residues 155-176 (FLMALAIIDDLGAIIIIALFYT). At 177 to 180 (NDLS) the chain is on the periplasmic side. The helical transmembrane segment at 181 to 200 (MASLGVAAVAIAVLAVLNLC) threads the bilayer. The Cytoplasmic portion of the chain corresponds to 201 to 204 (GVRR). The helical transmembrane segment at 205-222 (TGVYILVGVVLWTAVLKS) threads the bilayer. Position 223 (Gly223) is a topological domain, periplasmic. A helical transmembrane segment spans residues 224-236 (VHATLAGVIVGFF). The Cytoplasmic portion of the chain corresponds to 237–253 (IPLKEKHGRSPAKRLEH). The chain crosses the membrane as a helical span at residues 254 to 272 (VLHPWVAYLILPLFAFANA). The Periplasmic portion of the chain corresponds to 273–286 (GVSLQGVTLEGLTS). Residues 287–310 (ILPLGIIAGLLIGKPLGISLFCWL) form a helical membrane-spanning segment. Topologically, residues 311–339 (ALRLKLAHLPEGTTYQQIMAVGILCGIGF) are cytoplasmic. The helical transmembrane segment at 340–350 (TMSIFIASLAF) threads the bilayer. The Periplasmic portion of the chain corresponds to 351–357 (GSVDPEL). A helical membrane pass occupies residues 358–380 (INWAKLGILVGSISSAVIGYSWL). Topologically, residues 381-388 (RVRLRPSV) are cytoplasmic.

This sequence belongs to the NhaA Na(+)/H(+) (TC 2.A.33) antiporter family.

Its subcellular location is the cell inner membrane. It catalyses the reaction Na(+)(in) + 2 H(+)(out) = Na(+)(out) + 2 H(+)(in). Its function is as follows. Na(+)/H(+) antiporter that extrudes sodium in exchange for external protons. The chain is Na(+)/H(+) antiporter NhaA from Escherichia coli O6:K15:H31 (strain 536 / UPEC).